The following is a 361-amino-acid chain: MALLELRDVTRRFGDFTAVDCVNLSIEAGELFTLLGPSGCGKTTLLRMIAGFDVPDSGQILLDGQDIANTPPEKRPIHTVFQSYALFPHMTVADNVAFPLKMSGKTPAEIKKRVEKALEEVQLSRFTHRFPHELSGGQKQRVAFARGLINRPRLLLMDEPLGALDAKLREDMQRELISLQKEVGITFVFVTHSQDEALALSQRIAVMNQGQVEQIGEPSVIYSHPANRFIADFIGKINLMAARVTQVSDNDMTLEIDQLGTTTLPLKQGIKTGDQGVMAIRPEQVSVHALARHAELPHAHTGKVLDFLYVGDVTTYIVELDCGIRVEALLANSSPGRARFFEVGDPVIVSWTREAAQFLMN.

The ABC transporter domain occupies 4-234; the sequence is LELRDVTRRF…PANRFIADFI (231 aa). 36–43 is a binding site for ATP; the sequence is GPSGCGKT.

This sequence belongs to the ABC transporter superfamily. Spermidine/putrescine importer (TC 3.A.1.11.1) family. As to quaternary structure, the complex is composed of two ATP-binding proteins (PotA), two transmembrane proteins (PotB and PotC) and a solute-binding protein (PotD).

The protein localises to the cell inner membrane. The enzyme catalyses ATP + H2O + polyamine-[polyamine-binding protein]Side 1 = ADP + phosphate + polyamineSide 2 + [polyamine-binding protein]Side 1.. Functionally, part of the ABC transporter complex PotABCD involved in spermidine/putrescine import. Responsible for energy coupling to the transport system. This is Spermidine/putrescine import ATP-binding protein PotA from Nitrosomonas europaea (strain ATCC 19718 / CIP 103999 / KCTC 2705 / NBRC 14298).